The sequence spans 182 residues: MTFEQLIPLIIMAFALGMDAFSVSLGMGMMALKIRQILYIGVTIGIFHIIMPFIGMVLGRFLSEQYGDIAHFAGAILLIGLGFYIVYSSILENEETRTAPIGISLFVFAFGVSIDSFSVGLSLGIYGAQTIITILLFGFVSMLLAWIGLLIGRHAKGMLGTYGEIVGGIILVGFGLYLLFPI.

Helical transmembrane passes span 6–26 (LIPL…VSLG), 37–57 (ILYI…IGMV), 71–91 (HFAG…SSIL), 101–121 (IGIS…SVGL), 131–151 (IITI…GLLI), and 162–182 (YGEI…LFPI).

This sequence belongs to the MntP (TC 9.B.29) family.

The protein resides in the cell membrane. Its function is as follows. Probably functions as a manganese efflux pump. This is Putative manganese efflux pump MntP from Bacillus anthracis (strain A0248).